The sequence spans 224 residues: Ribosomal RNA small subunit methyltransferase I (224 aa).

This sequence belongs to the methyltransferase superfamily. RsmI family.

The protein localises to the cytoplasm. It catalyses the reaction cytidine(1402) in 16S rRNA + S-adenosyl-L-methionine = 2'-O-methylcytidine(1402) in 16S rRNA + S-adenosyl-L-homocysteine + H(+). Its function is as follows. Catalyzes the 2'-O-methylation of the ribose of cytidine 1402 (C1402) in 16S rRNA. This is Ribosomal RNA small subunit methyltransferase I from Borrelia garinii subsp. bavariensis (strain ATCC BAA-2496 / DSM 23469 / PBi) (Borreliella bavariensis).